The chain runs to 373 residues: Ferroptosis suppressor protein 1 (373 aa).

Glycine 2 is lipidated: N-myristoyl glycine. A helical transmembrane segment spans residues 7-27; that stretch reads VDTGAVHVVIVGGGFGGIAAA. Residues 18-22, arginine 54, and valine 82 each bind 6-hydroxy-FAD; that span reads GGGFG. Lysine 168 carries the N6-acetyllysine modification. Aspartate 285 provides a ligand contact to 6-hydroxy-FAD.

It belongs to the FAD-dependent oxidoreductase family. In terms of assembly, interacts with importin subunits KPNA2 and IPO5; this interaction likely mediates the translocation into the nucleus upon oxidative stress. It depends on 6-hydroxy-FAD as a cofactor. Post-translationally, N-myristoylation at Gly-2 mediates the recruitment to lipid droplets and plasma membrane. In terms of processing, acetylation at Lys-168 prevents AIFM2 ubiquitination and degradation, thereby inhibiting ferroptosis. KAT2B mediates acetylation at Lys-168, while HDAC3 removes it. Ubiquitinated. AIFM2 undergoes 'Lys-29'-ubiquitination and proteasomal degradation, which is inhibited by acetylation at Lys-168. Detected in most normal tissues as two transcripts of 1.8 and 4.0 kb in length, respectively. Highly expressed in liver, testis, and kidney, and expressed at lower levels in pancreas, spleen, brain and lung. Expressed in heart (at protein level).

The protein resides in the lipid droplet. It localises to the cell membrane. The protein localises to the cytoplasm. Its subcellular location is the mitochondrion membrane. It is found in the nucleus. The catalysed reaction is ubiquinone-10 + NADH + H(+) = ubiquinol-10 + NAD(+). The enzyme catalyses phylloquinone + NADH + H(+) = phylloquinol + NAD(+). It catalyses the reaction menaquinone-4 + NADH + H(+) = menaquinol-4 + NAD(+). It carries out the reaction menadione + NADH + H(+) = menadiol + NAD(+). With respect to regulation, the modification by 4-hydroxy-2-nonenal (HNE) adduction in mitochondria results in loss of the oxidoreductase activity and activation of a novel function in mitochondrial oxidative stress signaling. An NAD(P)H-dependent oxidoreductase that acts as a key inhibitor of ferroptosis. At the plasma membrane, catalyzes reduction of coenzyme Q/ubiquinone-10 to ubiquinol-10, a lipophilic radical-trapping antioxidant that prevents lipid oxidative damage and consequently ferroptosis. Acts in parallel to GPX4 to suppress phospholipid peroxidation and ferroptosis. This anti-ferroptotic function is independent of cellular glutathione levels. Also acts as a potent radical-trapping antioxidant by mediating warfarin-resistant vitamin K reduction in the canonical vitamin K cycle: catalyzes NAD(P)H-dependent reduction of vitamin K (phylloquinone, menaquinone-4 and menadione) to hydroquinone forms. Hydroquinones act as potent radical-trapping antioxidants inhibitor of phospholipid peroxidation and ferroptosis. May play a role in mitochondrial stress signaling. Upon oxidative stress, associates with the lipid peroxidation end product 4-hydroxy-2-nonenal (HNE) forming a lipid adduct devoid of oxidoreductase activity, which then translocates from mitochondria into the nucleus triggering DNA damage and cell death. In Mus musculus (Mouse), this protein is Ferroptosis suppressor protein 1.